The primary structure comprises 217 residues: Large ribosomal subunit protein uL29m (217 aa).

Belongs to the universal ribosomal protein uL29 family. Component of the mitochondrial large ribosomal subunit. Mature mitochondrial ribosomes consist of a small (37S) and a large (54S) subunit. The 37S subunit contains at least 33 different proteins and 1 molecule of RNA (15S). The 54S subunit contains at least 45 different proteins and 1 molecule of RNA (21S).

The protein resides in the mitochondrion. In Aspergillus fumigatus (strain ATCC MYA-4609 / CBS 101355 / FGSC A1100 / Af293) (Neosartorya fumigata), this protein is Large ribosomal subunit protein uL29m (mrpl4).